Consider the following 211-residue polypeptide: Large ribosomal subunit protein uL3 (211 aa).

Gln-151 is modified (N5-methylglutamine).

Belongs to the universal ribosomal protein uL3 family. In terms of assembly, part of the 50S ribosomal subunit. Forms a cluster with proteins L14 and L19. In terms of processing, methylated by PrmB.

Its function is as follows. One of the primary rRNA binding proteins, it binds directly near the 3'-end of the 23S rRNA, where it nucleates assembly of the 50S subunit. The sequence is that of Large ribosomal subunit protein uL3 from Francisella tularensis subsp. tularensis (strain FSC 198).